We begin with the raw amino-acid sequence, 657 residues long: L-type lectin-domain containing receptor kinase I.8 (657 aa).

The signal sequence occupies residues 1–23 (MAPGLDLIWMVISFLLLIHLSSQ). Residues 24 to 282 (QETGFSFNGF…QVPHPKMKTS (259 aa)) lie on the Extracellular side of the membrane. Residues 25–257 (ETGFSFNGFR…NHYILGWSFS (233 aa)) form a legume-lectin like region. 5 N-linked (GlcNAc...) asparagine glycosylation sites follow: Asn-74, Asn-124, Asn-181, Asn-204, and Asn-225. A helical membrane pass occupies residues 283-303 (LLLILLLIVLGIILLVLLVGA). The Cytoplasmic portion of the chain corresponds to 304 to 657 (YLYRRNKYAE…THSIQYGIGR (354 aa)). A Protein kinase domain is found at 339 to 611 (FHKDGFLGKG…VQYLDRQVSL (273 aa)). ATP contacts are provided by residues 345-353 (LGKGGFGEV) and Lys-366. Asp-462 functions as the Proton acceptor in the catalytic mechanism.

This sequence in the C-terminal section; belongs to the protein kinase superfamily. Ser/Thr protein kinase family. In the N-terminal section; belongs to the leguminous lectin family.

It is found in the cell membrane. It carries out the reaction L-seryl-[protein] + ATP = O-phospho-L-seryl-[protein] + ADP + H(+). The catalysed reaction is L-threonyl-[protein] + ATP = O-phospho-L-threonyl-[protein] + ADP + H(+). Its function is as follows. Involved in resistance response to the pathogenic fungus Alternaria brassicicola. The chain is L-type lectin-domain containing receptor kinase I.8 from Arabidopsis thaliana (Mouse-ear cress).